The sequence spans 261 residues: Phosphatidylglycerol--prolipoprotein diacylglyceryl transferase (261 aa).

4 consecutive transmembrane segments (helical) span residues 13 to 33, 50 to 70, 86 to 106, and 112 to 132; these read LQIRWYSLSYIFGMIFAYWYI, VISWWVISVILGGRIGYILFY, WNGGMSFHGALVGVMIGMYIF, and IDVLAAFDLGACAVPVGIFFG. Arginine 133 provides a ligand contact to a 1,2-diacyl-sn-glycero-3-phospho-(1'-sn-glycerol). The next 3 helical transmembrane spans lie at 169–189, 197–217, and 232–252; these read LYEAFGEGFLLFIITNSLFFF, GMLSSVFCIWYGVIRFFIEFV, and ITMGQLLSIFMIIMGFYFIKL.

This sequence belongs to the Lgt family.

The protein resides in the cell inner membrane. It catalyses the reaction L-cysteinyl-[prolipoprotein] + a 1,2-diacyl-sn-glycero-3-phospho-(1'-sn-glycerol) = an S-1,2-diacyl-sn-glyceryl-L-cysteinyl-[prolipoprotein] + sn-glycerol 1-phosphate + H(+). Its pathway is protein modification; lipoprotein biosynthesis (diacylglyceryl transfer). Its function is as follows. Catalyzes the transfer of the diacylglyceryl group from phosphatidylglycerol to the sulfhydryl group of the N-terminal cysteine of a prolipoprotein, the first step in the formation of mature lipoproteins. This chain is Phosphatidylglycerol--prolipoprotein diacylglyceryl transferase, found in Ehrlichia canis (strain Jake).